The primary structure comprises 616 residues: Glycogenin-1 (616 aa).

UDP-binding residues include leucine 10, tyrosine 16, and arginine 95. UDP-alpha-D-glucose-binding residues include leucine 10, tyrosine 16, arginine 95, lysine 104, aspartate 120, aspartate 122, asparagine 158, serine 159, aspartate 185, aspartate 188, and glutamine 189. UDP-binding residues include aspartate 120 and aspartate 122. Residues aspartate 120 and aspartate 122 each contribute to the Mn(2+) site. O-linked (Glc...) tyrosine glycosylation is present at tyrosine 230. Residues histidine 247, glycine 250, and lysine 253 each coordinate UDP. A Mn(2+)-binding site is contributed by histidine 247. UDP-alpha-D-glucose is bound by residues glycine 250 and lysine 253. Over residues 283 to 302 (HQLNNEVSKPKISDSDKTET) the composition is skewed to basic and acidic residues. 4 disordered regions span residues 283–320 (HQLNNEVSKPKISDSDKTETPETITPVDAPPSNEPTTN), 335–354 (NQNAEPVPNSDHSPAPNPVP), 371–525 (TNQP…EKDK), and 553–588 (RDATEGETKTSAVADKQEDMKLTAEETNQPQQEMPN). The span at 377–386 (ESREYSKEND) shows a compositional bias: basic and acidic residues. Over residues 400–419 (SPPNSTQELNSSYSVVSTQA) the composition is skewed to polar residues. Over residues 450 to 461 (STAASSNNNVSN) the composition is skewed to low complexity. Composition is skewed to polar residues over residues 462–485 (QPDGKNFSNSKENNISVESSPSNP) and 492–503 (DNIQKPSVSTND). A compositionally biased stretch (basic and acidic residues) spans 567–576 (DKQEDMKLTA). Polar residues predominate over residues 577 to 586 (EETNQPQQEM). The O-linked (Glc...) tyrosine glycan is linked to tyrosine 598.

Belongs to the glycosyltransferase 8 family. Glycogenin subfamily. The cofactor is Mn(2+).

It is found in the cytoplasm. It localises to the vacuole. The catalysed reaction is L-tyrosyl-[glycogenin] + UDP-alpha-D-glucose = alpha-D-glucosyl-L-tyrosyl-[glycogenin] + UDP + H(+). It catalyses the reaction [1,4-alpha-D-glucosyl](n)-L-tyrosyl-[glycogenin] + UDP-alpha-D-glucose = [1,4-alpha-D-glucosyl](n+1)-L-tyrosyl-[glycogenin] + UDP + H(+). Its function is as follows. Self-glucosylating initiator of glycogen synthesis. It catalyzes the formation of a short alpha (1,4)-glucosyl chain covalently attached via a glucose 1-O-tyrosyl linkage to internal tyrosine residues and these chains act as primers for the elongation reaction catalyzed by glycogen synthase. Capable of transferring glucosyl residues to unbound acceptors such as free oligoglucans or oligoglucan derivatives. The sequence is that of Glycogenin-1 from Saccharomyces cerevisiae (strain ATCC 204508 / S288c) (Baker's yeast).